The primary structure comprises 251 residues: Imidazole glycerol phosphate synthase subunit HisF (251 aa).

Residues D11 and D130 contribute to the active site.

This sequence belongs to the HisA/HisF family. As to quaternary structure, heterodimer of HisH and HisF.

It localises to the cytoplasm. It catalyses the reaction 5-[(5-phospho-1-deoxy-D-ribulos-1-ylimino)methylamino]-1-(5-phospho-beta-D-ribosyl)imidazole-4-carboxamide + L-glutamine = D-erythro-1-(imidazol-4-yl)glycerol 3-phosphate + 5-amino-1-(5-phospho-beta-D-ribosyl)imidazole-4-carboxamide + L-glutamate + H(+). It participates in amino-acid biosynthesis; L-histidine biosynthesis; L-histidine from 5-phospho-alpha-D-ribose 1-diphosphate: step 5/9. Its function is as follows. IGPS catalyzes the conversion of PRFAR and glutamine to IGP, AICAR and glutamate. The HisF subunit catalyzes the cyclization activity that produces IGP and AICAR from PRFAR using the ammonia provided by the HisH subunit. The sequence is that of Imidazole glycerol phosphate synthase subunit HisF from Streptococcus mutans serotype c (strain ATCC 700610 / UA159).